The sequence spans 292 residues: UPF0696 protein C11orf68 (292 aa).

Over residues 1 to 11 the composition is skewed to low complexity; sequence MAAAAAAAVAG. Residues 1–60 are disordered; that stretch reads MAAAAAAAVAGVGRGGGGAEPRQERSRARGWAGVERSEGRRMEPGEELEEEGSPGGREDG. Position 29 is an omega-N-methylarginine (arginine 29). Basic and acidic residues predominate over residues 35-44; sequence ERSEGRRMEP.

It belongs to the UPF0696 family.

This Homo sapiens (Human) protein is UPF0696 protein C11orf68 (C11orf68).